A 383-amino-acid polypeptide reads, in one-letter code: Acyl-CoA dehydrogenase, short-chain specific (383 aa).

Glu-367 functions as the Proton acceptor in the catalytic mechanism.

It belongs to the acyl-CoA dehydrogenase family. In terms of assembly, homotetramer. FAD is required as a cofactor.

The enzyme catalyses butanoyl-CoA + oxidized [electron-transfer flavoprotein] + H(+) = (2E)-butenoyl-CoA + reduced [electron-transfer flavoprotein]. It catalyses the reaction a short-chain 2,3-saturated fatty acyl-CoA + oxidized [electron-transfer flavoprotein] + H(+) = a short-chain (2E)-enoyl-CoA + reduced [electron-transfer flavoprotein]. Functionally, has an optimum specificity for 4-carbon length fatty acyl-CoAs. The sequence is that of Acyl-CoA dehydrogenase, short-chain specific from Megasphaera elsdenii.